A 423-amino-acid polypeptide reads, in one-letter code: Probable baseplate hub protein gp334 (423 aa).

As to quaternary structure, homotrimer. Interacts with gp5 trimer.

Its subcellular location is the virion. Baseplate protein that is part of the baseplate hub. Involved in the tail assembly. This Vibrio parahaemolyticus (KVP40) protein is Probable baseplate hub protein gp334.